The following is a 1179-amino-acid chain: MANGGGGGGGSSGGGGGGGGGGSGLRMSSNIHASHLSLDASSSSSSSSSSSSSSSSSSSSSVHEPKMDALIIPVTMEVPCDSRGQRMWWAFLASSMVTFFGGLFIILLWRTLKYLWTVCCHCGGKAKEAQKINNGSSQADGTLKPVDEKEEAVAAEVGWMTSVKDWAGVMISAQTLTGRVLVVLVFALSIGALVIYFIDSSNPIESCQNFYKDFTLQIDMAFNVFFLLYFGLRFIAANDKLWFWLEVNSVVDFFTVPPVFVSVYLNRSWLGLRFLRALRLIQFSEILQFLNILKTSNSIKLVNLLSIFISTWLTAAGFIHLVENSGDPWENFQNNQALTYWECVYLLMVTMSTVGYGDVYAKTTLGRLFMVFFILGGLAMFASYVPEIIELIGNRKKYGGSYSAVSGRKHIVVCGHITLESVSNFLKDFLHKDRDDVNVEIVFLHNISPNLELEALFKRHFTQVEFYQGSVLNPHDLARVKIESADACLILANKYCADPDAEDASNIMRVISIKNYHPKIRIITQMLQYHNKAHLLNIPSWNWKEGDDAICLAELKLGFIAQSCLAQGLSTMLANLFSMRSFIKIEEDTWQKYYLEGVSNEMYTEYLSSAFVGLSFPTVCELCFVKLKLLMIAIEYKSANRESRILINPGNHLKIQEGTLGFFIASDAKEVKRAFFYCKACHDDITDPKRIKKCGCKRLEDEQPSTLSPKKKQRNGGMRNSPNSSPKLMRHDPLLIPGNDQIDNMDSNVKKYDSTGMFHWCAPKEIEKVILTRSEAAMTVLSGHVVVCIFGDVSSALIGLRNLVMPLRASNFHYHELKHIVFVGSIEYLKREWETLHNFPKVSILPGTPLSRADLRAVNINLCDMCVILSANQNNIDDTSLQDKECILASLNIKSMQFDDSIGVLQANSQGFTPPGMDRSSPDNSPVHGMLRQPSITTGVNIPIITELVNDTNVQFLDQDDDDDPDTELYLTQPFACGTAFAVSVLDSLMSATYFNDNILTLIRTLVTGGATPELEALIAEENALRGGYSTPQTLANRDRCRVAQLALLDGPFADLGDGGCYGDLFCKALKTYNMLCFGIYRLRDAHLSTPSQCTKRYVITNPPYEFELVPTDLIFCLMQFDHNAGQSRASLSHSSHSSQSSSKKSSSVHSIPSTANRQNRPKSRESRDKQKYVQEERL.

Residues 1-24 are compositionally biased toward gly residues; that stretch reads MANGGGGGGGSSGGGGGGGGGGSG. The interval 1–62 is disordered; that stretch reads MANGGGGGGG…SSSSSSSSSV (62 aa). Residues 1 to 87 are Extracellular-facing; the sequence is MANGGGGGGG…VPCDSRGQRM (87 aa). The span at 41-61 shows a compositional bias: low complexity; it reads SSSSSSSSSSSSSSSSSSSSS. Residues 88 to 108 traverse the membrane as a helical segment; the sequence is WWAFLASSMVTFFGGLFIILL. The Cytoplasmic portion of the chain corresponds to 109–179; it reads WRTLKYLWTV…MISAQTLTGR (71 aa). 3 S-palmitoyl cysteine lipidation sites follow: cysteine 119, cysteine 120, and cysteine 122. A helical membrane pass occupies residues 180–200; sequence VLVVLVFALSIGALVIYFIDS. The Extracellular portion of the chain corresponds to 201–215; sequence SNPIESCQNFYKDFT. A helical membrane pass occupies residues 216 to 236; it reads LQIDMAFNVFFLLYFGLRFIA. The Cytoplasmic portion of the chain corresponds to 237–240; that stretch reads ANDK. A helical membrane pass occupies residues 241-261; it reads LWFWLEVNSVVDFFTVPPVFV. Residues 262 to 265 lie on the Extracellular side of the membrane; it reads SVYL. A helical; Voltage-sensor membrane pass occupies residues 266 to 286; it reads NRSWLGLRFLRALRLIQFSEI. The Cytoplasmic portion of the chain corresponds to 287-301; that stretch reads LQFLNILKTSNSIKL. The helical transmembrane segment at 302-322 threads the bilayer; that stretch reads VNLLSIFISTWLTAAGFIHLV. The Extracellular portion of the chain corresponds to 323 to 336; that stretch reads ENSGDPWENFQNNQ. An intramembrane region (pore-forming) is located at residues 337-359; that stretch reads ALTYWECVYLLMVTMSTVGYGDV. The short motif at 353-356 is the Selectivity for potassium element; the sequence is TVGY. Topologically, residues 360–368 are extracellular; sequence YAKTTLGRL. The chain crosses the membrane as a helical span at residues 369-389; that stretch reads FMVFFILGGLAMFASYVPEII. Residues 390-1179 are Cytoplasmic-facing; sequence ELIGNRKKYG…KQKYVQEERL (790 aa). Residues 408-550 enclose the RCK N-terminal 1 domain; the sequence is RKHIVVCGHI…WNWKEGDDAI (143 aa). Mg(2+)-binding residues include glutamate 440, glutamine 463, and glutamate 465. The segment S7 stretch occupies residues 557–577; that stretch reads LGFIAQSCLAQGLSTMLANLF. Residues 614–634 are segment S8; that stretch reads LSFPTVCELCFVKLKLLMIAI. The interval 678-682 is heme-binding motif; that stretch reads CKACH. The tract at residues 702 to 730 is disordered; sequence EQPSTLSPKKKQRNGGMRNSPNSSPKLMR. Threonine 706 bears the Phosphothreonine mark. A phosphoserine mark is found at serine 708, serine 721, and serine 725. The tract at residues 780 to 800 is segment S9; sequence VLSGHVVVCIFGDVSSALIGL. Residues 782–926 form the RCK N-terminal 2 domain; sequence SGHVVVCIFG…MDRSSPDNSP (145 aa). A Phosphothreonine modification is found at threonine 913. A phosphoserine mark is found at serine 921 and serine 925. The Calcium bowl signature appears at 946–968; it reads TELVNDTNVQFLDQDDDDDPDTE. Glutamine 955, aspartate 958, aspartate 961, and aspartate 963 together coordinate Ca(2+). Residues 975–995 are segment S10; sequence FACGTAFAVSVLDSLMSATYF. The segment covering 1129-1154 has biased composition (low complexity); that stretch reads RASLSHSSHSSQSSSKKSSSVHSIPS. The segment at 1129–1179 is disordered; sequence RASLSHSSHSSQSSSKKSSSVHSIPSTANRQNRPKSRESRDKQKYVQEERL. Residues 1163 to 1179 show a composition bias toward basic and acidic residues; it reads KSRESRDKQKYVQEERL. Phosphoserine occurs at positions 1164 and 1167.

This sequence belongs to the potassium channel family. Calcium-activated (TC 1.A.1.3) subfamily. KCa1.1/KCNMA1 sub-subfamily. As to quaternary structure, homotetramer; which constitutes the calcium-activated potassium channel. Interacts with beta subunits KCNMB1, KCNMB2, KCNMB3 and KCNMB4. Interacts with gamma subunits LRRC26, LRRC38, LRRC52 and LRRC55. Beta and gamma subunits are accessory, and modulate its activity. Interacts with RAB11B. Post-translationally, phosphorylated. Phosphorylation by kinases such as PKA and/or PKG. In smooth muscles, phosphorylation affects its activity. In terms of processing, palmitoylation by ZDHHC22 and ZDHHC23 within the intracellular linker between the S0 and S1 transmembrane domains regulates localization to the plasma membrane. Depalmitoylated by LYPLA1 and LYPLAL1, leading to retard exit from the trans-Golgi network.

The protein resides in the cell membrane. It is found in the endoplasmic reticulum membrane. The catalysed reaction is K(+)(in) = K(+)(out). Ethanol and carbon monoxide-bound heme increase channel activation. Heme inhibits channel activation. In terms of biological role, potassium channel activated by both membrane depolarization or increase in cytosolic Ca(2+) that mediates export of K(+). It is also activated by the concentration of cytosolic Mg(2+). Its activation dampens the excitatory events that elevate the cytosolic Ca(2+) concentration and/or depolarize the cell membrane. It therefore contributes to repolarization of the membrane potential. Plays a key role in controlling excitability in a number of systems, such as regulation of the contraction of smooth muscle, the tuning of hair cells in the cochlea, regulation of transmitter release, and innate immunity. In smooth muscles, its activation by high level of Ca(2+), caused by ryanodine receptors in the sarcoplasmic reticulum, regulates the membrane potential. In cochlea cells, its number and kinetic properties partly determine the characteristic frequency of each hair cell and thereby helps to establish a tonotopic map. Kinetics of KCNMA1 channels are determined by alternative splicing, phosphorylation status and its combination with modulating beta subunits. Highly sensitive to both iberiotoxin (IbTx) and charybdotoxin (CTX). Potassium channel activated by both membrane depolarization or increase in cytosolic Ca(2+) that mediates export of K(+). This is Calcium-activated potassium channel subunit alpha-1 (KCNMA1) from Oryctolagus cuniculus (Rabbit).